Reading from the N-terminus, the 545-residue chain is CTP synthase (545 aa).

Residues 1–266 (MTTNYIFVTG…DDYICKRFSL (266 aa)) form an amidoligase domain region. S14 contributes to the CTP binding site. Residue S14 participates in UTP binding. Residues 15-20 (SLGKGI) and D72 contribute to the ATP site. D72 and E140 together coordinate Mg(2+). CTP contacts are provided by residues 147-149 (DIE), 187-192 (KTKPTQ), and K223. UTP is bound by residues 187–192 (KTKPTQ) and K223. ATP is bound at residue 239-241 (KDV). A Glutamine amidotransferase type-1 domain is found at 291 to 542 (TIGMVGKYIE…VKAASEFQKR (252 aa)). G352 is a binding site for L-glutamine. C379 acts as the Nucleophile; for glutamine hydrolysis in catalysis. Residues 380-383 (LGMQ), E403, and R470 each bind L-glutamine. Catalysis depends on residues H515 and E517.

This sequence belongs to the CTP synthase family. As to quaternary structure, homotetramer.

It carries out the reaction UTP + L-glutamine + ATP + H2O = CTP + L-glutamate + ADP + phosphate + 2 H(+). The enzyme catalyses L-glutamine + H2O = L-glutamate + NH4(+). It catalyses the reaction UTP + NH4(+) + ATP = CTP + ADP + phosphate + 2 H(+). It participates in pyrimidine metabolism; CTP biosynthesis via de novo pathway; CTP from UDP: step 2/2. With respect to regulation, allosterically activated by GTP, when glutamine is the substrate; GTP has no effect on the reaction when ammonia is the substrate. The allosteric effector GTP functions by stabilizing the protein conformation that binds the tetrahedral intermediate(s) formed during glutamine hydrolysis. Inhibited by the product CTP, via allosteric rather than competitive inhibition. Catalyzes the ATP-dependent amination of UTP to CTP with either L-glutamine or ammonia as the source of nitrogen. Regulates intracellular CTP levels through interactions with the four ribonucleotide triphosphates. The chain is CTP synthase from Shigella boydii serotype 18 (strain CDC 3083-94 / BS512).